Here is a 436-residue protein sequence, read N- to C-terminus: tRNA (guanine(37)-N(1))-methyltransferase 1 (436 aa).

Residues His-229, 277–278 (DL), and Asn-325 each bind S-adenosyl-L-methionine.

Belongs to the class I-like SAM-binding methyltransferase superfamily. TRM5/TYW2 family. Monomer.

The protein localises to the mitochondrion matrix. Its subcellular location is the nucleus. It is found in the cytoplasm. It carries out the reaction guanosine(37) in tRNA + S-adenosyl-L-methionine = N(1)-methylguanosine(37) in tRNA + S-adenosyl-L-homocysteine + H(+). Its function is as follows. Specifically methylates the N1 position of guanosine-37 in various cytoplasmic and mitochondrial tRNAs. Methylation is not dependent on the nature of the nucleoside 5' of the target nucleoside. This is the first step in the biosynthesis of wybutosine (yW), a modified base adjacent to the anticodon of tRNAs and required for accurate decoding. The sequence is that of tRNA (guanine(37)-N(1))-methyltransferase 1 from Phaeodactylum tricornutum (strain CCAP 1055/1).